The primary structure comprises 287 residues: Nucleotide-binding protein VIBHAR_03667 (287 aa).

8 to 15 (GHSGAGKS) contributes to the ATP binding site. 56–59 (DIRN) contributes to the GTP binding site.

Belongs to the RapZ-like family.

In terms of biological role, displays ATPase and GTPase activities. The protein is Nucleotide-binding protein VIBHAR_03667 of Vibrio campbellii (strain ATCC BAA-1116).